A 413-amino-acid chain; its full sequence is uncharacterized protein (413 aa).

Disordered regions lie at residues 108–158 (ESVP…SKIS) and 232–257 (DRLG…RLGA). Serine 115 bears the Phosphoserine mark. Over residues 127-139 (SAASRMIANSLNH) the composition is skewed to polar residues. The residue at position 141 (serine 141) is a Phosphoserine. Residue lysine 239 forms a Glycyl lysine isopeptide (Lys-Gly) (interchain with G-Cter in SUMO2) linkage. Phosphoserine is present on residues serine 269 and serine 296. The segment at 290 to 336 (RGPTKASAQPALTVKAKAASSATSTATTPKLRRLALPSRPGLQKKPD) is disordered. A compositionally biased stretch (low complexity) spans 302–318 (TVKAKAASSATSTATTP). Position 342 is a phosphoserine (serine 342).

This is an uncharacterized protein from Mus musculus (Mouse).